A 93-amino-acid polypeptide reads, in one-letter code: uncharacterized protein (93 aa).

Residues 12 to 32 (VVGGLSFWTFSAGLIMIVNAL) form a helical membrane-spanning segment. Residues 47–66 (TANANGSDDDNENKNNSYRS) are disordered.

The protein resides in the cell membrane. This is an uncharacterized protein from Mycoplasma genitalium (strain ATCC 33530 / DSM 19775 / NCTC 10195 / G37) (Mycoplasmoides genitalium).